Consider the following 116-residue polypeptide: U16-barytoxin-Tl1f (116 aa).

The signal sequence occupies residues methionine 1–alanine 20. Positions asparagine 21–arginine 74 are excised as a propeptide. 3 disulfide bridges follow: cysteine 75/cysteine 90, cysteine 82/cysteine 95, and cysteine 89/cysteine 110. Residue asparagine 85 is glycosylated (N-linked (GlcNAc...) asparagine).

This sequence belongs to the neurotoxin 14 (magi-1) family. 06 (ICK-Trit) subfamily. In terms of tissue distribution, expressed by the venom gland.

It localises to the secreted. In terms of biological role, ion channel inhibitor. In Trittame loki (Brush-footed trapdoor spider), this protein is U16-barytoxin-Tl1f.